The following is a 633-amino-acid chain: Phospholipid--sterol O-acyltransferase (633 aa).

At 1-6 the chain is on the cytoplasmic side; sequence MGANSK. Residues 7–29 form a helical; Signal-anchor for type II membrane protein membrane-spanning segment; sequence SVTASFTVIAVFFLICGGRTAVE. The Lumenal segment spans residues 30 to 633; the sequence is DETEFHGDYS…TSANMLLQYI (604 aa). Ser-195 serves as the catalytic Acyl-ester intermediate. Active-site charge relay system residues include Asp-461 and His-505.

Belongs to the AB hydrolase superfamily. Lipase family.

Its subcellular location is the microsome membrane. Involved in lipid catabolism. Essential for sterol esters biosynthesis in leaves and seeds, but not in flowers. Plays a role in controlling the free sterol content of leaves. Catalyzes the transacylation of acyl groups from phospholipids to a variety of different sterols. Prefers phosphatidylethanolamine over phosphatidylcholine as an acyl donor. Not active toward neutral lipids. Highly specific for position sn-2, which in plant lipids is essentially devoid of saturated acyl groups. Broad sterol specificity (cholesterol &gt; campesterol &gt; sitosterol &gt; stigmasterol), but no activity with lupeol or beta-amyrin. In Arabidopsis thaliana (Mouse-ear cress), this protein is Phospholipid--sterol O-acyltransferase (PSAT).